The chain runs to 213 residues: Large ribosomal subunit protein uL1 (213 aa).

Belongs to the universal ribosomal protein uL1 family. Part of the 50S ribosomal subunit.

Its function is as follows. Probably involved in E site tRNA release. Binds directly to 23S rRNA. In terms of biological role, protein L1 is also a translational repressor protein, it controls the translation of its operon by binding to its mRNA. The protein is Large ribosomal subunit protein uL1 of Methanothermococcus thermolithotrophicus (Methanococcus thermolithotrophicus).